Consider the following 227-residue polypeptide: Cytochrome c oxidase subunit 2 (227 aa).

At 1–14 (MAYPFQLGLQDATS) the chain is on the mitochondrial intermembrane side. The chain crosses the membrane as a helical span at residues 15–45 (PIMEELTNFHDHTLMIVFLISSLVLYLISLM). At 46-59 (LTTKLIHTNTMDAQ) the chain is on the mitochondrial matrix side. Residues 60–87 (EVETVWTILPAIILIMIALPSLRILYLM) form a helical membrane-spanning segment. Residues 88-227 (DEINNPVLTV…LFENWSTSMI (140 aa)) are Mitochondrial intermembrane-facing. H161, C196, E198, C200, H204, and M207 together coordinate Cu cation. E198 lines the Mg(2+) pocket.

This sequence belongs to the cytochrome c oxidase subunit 2 family. As to quaternary structure, component of the cytochrome c oxidase (complex IV, CIV), a multisubunit enzyme composed of 14 subunits. The complex is composed of a catalytic core of 3 subunits MT-CO1, MT-CO2 and MT-CO3, encoded in the mitochondrial DNA, and 11 supernumerary subunits COX4I, COX5A, COX5B, COX6A, COX6B, COX6C, COX7A, COX7B, COX7C, COX8 and NDUFA4, which are encoded in the nuclear genome. The complex exists as a monomer or a dimer and forms supercomplexes (SCs) in the inner mitochondrial membrane with NADH-ubiquinone oxidoreductase (complex I, CI) and ubiquinol-cytochrome c oxidoreductase (cytochrome b-c1 complex, complex III, CIII), resulting in different assemblies (supercomplex SCI(1)III(2)IV(1) and megacomplex MCI(2)III(2)IV(2)). Found in a complex with TMEM177, COA6, COX18, COX20, SCO1 and SCO2. Interacts with TMEM177 in a COX20-dependent manner. Interacts with COX20. Interacts with COX16. The cofactor is Cu cation.

Its subcellular location is the mitochondrion inner membrane. The enzyme catalyses 4 Fe(II)-[cytochrome c] + O2 + 8 H(+)(in) = 4 Fe(III)-[cytochrome c] + 2 H2O + 4 H(+)(out). Component of the cytochrome c oxidase, the last enzyme in the mitochondrial electron transport chain which drives oxidative phosphorylation. The respiratory chain contains 3 multisubunit complexes succinate dehydrogenase (complex II, CII), ubiquinol-cytochrome c oxidoreductase (cytochrome b-c1 complex, complex III, CIII) and cytochrome c oxidase (complex IV, CIV), that cooperate to transfer electrons derived from NADH and succinate to molecular oxygen, creating an electrochemical gradient over the inner membrane that drives transmembrane transport and the ATP synthase. Cytochrome c oxidase is the component of the respiratory chain that catalyzes the reduction of oxygen to water. Electrons originating from reduced cytochrome c in the intermembrane space (IMS) are transferred via the dinuclear copper A center (CU(A)) of subunit 2 and heme A of subunit 1 to the active site in subunit 1, a binuclear center (BNC) formed by heme A3 and copper B (CU(B)). The BNC reduces molecular oxygen to 2 water molecules using 4 electrons from cytochrome c in the IMS and 4 protons from the mitochondrial matrix. This chain is Cytochrome c oxidase subunit 2 (MT-CO2), found in Gerbillurus vallinus (Brush-tailed hairy-footed gerbil).